We begin with the raw amino-acid sequence, 90 residues long: Small ribosomal subunit protein bS16 (90 aa).

It belongs to the bacterial ribosomal protein bS16 family.

The sequence is that of Small ribosomal subunit protein bS16 from Streptococcus pneumoniae serotype 19F (strain G54).